The chain runs to 432 residues: Adenylosuccinate synthetase (432 aa).

GTP is bound by residues 13-19 (GDEGKGK) and 41-43 (GHT). The active-site Proton acceptor is Asp14. Mg(2+) contacts are provided by Asp14 and Gly41. Residues 14-17 (DEGK), 39-42 (NAGH), Thr130, Arg144, Gln225, Thr240, and Arg304 each bind IMP. The active-site Proton donor is His42. A substrate-binding site is contributed by 300 to 306 (ATTGRRR). Residues Arg306, 332–334 (KLD), and 415–417 (STG) each bind GTP.

Belongs to the adenylosuccinate synthetase family. Homodimer. Mg(2+) serves as cofactor.

It localises to the cytoplasm. It carries out the reaction IMP + L-aspartate + GTP = N(6)-(1,2-dicarboxyethyl)-AMP + GDP + phosphate + 2 H(+). Its pathway is purine metabolism; AMP biosynthesis via de novo pathway; AMP from IMP: step 1/2. Its function is as follows. Plays an important role in the de novo pathway of purine nucleotide biosynthesis. Catalyzes the first committed step in the biosynthesis of AMP from IMP. The protein is Adenylosuccinate synthetase of Shigella sonnei (strain Ss046).